Consider the following 383-residue polypeptide: Probable cell wall hydrolase LytN (383 aa).

A signal peptide spans 1–49; sequence MFVYYCKECFIMNKQQSKVRYSIRKVSIGILSISIGMFLALGMSNKAYA. The 45-residue stretch at 175–219 folds into the LysM domain; that stretch reads QIYTVKKGDTLSAIALKYKTTVSNIQNTNNIANPNLIFIGQKLKV. One can recognise a Peptidase C51 domain in the interval 241–378; it reads NSSTLNYLKT…NYENDMIFIR (138 aa).

The protein resides in the secreted. In terms of biological role, probably involved in peptidoglycan hydrolysis. The chain is Probable cell wall hydrolase LytN (lytN) from Staphylococcus aureus (strain MSSA476).